The following is a 248-amino-acid chain: Probable aquaporin TIP2-1 (248 aa).

Helical transmembrane passes span 20 to 40 (AYVAEFIATLLFVFAGVGSAI) and 54 to 74 (AGLVAIAIAHALALFVGVSVA). The NPA 1 motif lies at 83-85 (NPA). 3 helical membrane passes run 97-119 (TILTGLFYWIAQLLGASIACLLL), 141-161 (GVVMEIVITFALVYTVYATAA), and 168-188 (LGTIAPIAIGFIVGANILAAG). The NPA 2 motif lies at 196-198 (NPA). Residues 217–237 (WVGPLIGGGLAGLVYGDVFIG) form a helical membrane-spanning segment.

It belongs to the MIP/aquaporin (TC 1.A.8) family. TIP (TC 1.A.8.10) subfamily. Expressed in roots and anthers.

The protein resides in the vacuole membrane. Aquaporins facilitate the transport of water and small neutral solutes across cell membranes. May be involved in transport from the vacuolar compartment to the cytoplasm. This is Probable aquaporin TIP2-1 (TIP2-1) from Oryza sativa subsp. japonica (Rice).